Reading from the N-terminus, the 221-residue chain is Ribosomal RNA small subunit methyltransferase Nep1 (221 aa).

S-adenosyl-L-methionine is bound by residues glycine 174, glycine 179, and 196–201 (LGEVAM).

This sequence belongs to the class IV-like SAM-binding methyltransferase superfamily. RNA methyltransferase NEP1 family. Homodimer.

It catalyses the reaction a pseudouridine in rRNA + S-adenosyl-L-methionine = an N(1)-methylpseudouridine in rRNA + S-adenosyl-L-homocysteine + H(+). Methyltransferase involved in ribosomal biogenesis. Specifically catalyzes the N1-methylation of the pseudouridine corresponding to position 914 in M.jannaschii 16S rRNA. The protein is Ribosomal RNA small subunit methyltransferase Nep1 of Pyrobaculum arsenaticum (strain DSM 13514 / JCM 11321 / PZ6).